Consider the following 298-residue polypeptide: ATP phosphoribosyltransferase (298 aa).

It belongs to the ATP phosphoribosyltransferase family. Long subfamily. Requires Mg(2+) as cofactor.

Its subcellular location is the cytoplasm. The enzyme catalyses 1-(5-phospho-beta-D-ribosyl)-ATP + diphosphate = 5-phospho-alpha-D-ribose 1-diphosphate + ATP. The protein operates within amino-acid biosynthesis; L-histidine biosynthesis; L-histidine from 5-phospho-alpha-D-ribose 1-diphosphate: step 1/9. Its activity is regulated as follows. Feedback inhibited by histidine. Functionally, catalyzes the condensation of ATP and 5-phosphoribose 1-diphosphate to form N'-(5'-phosphoribosyl)-ATP (PR-ATP). Has a crucial role in the pathway because the rate of histidine biosynthesis seems to be controlled primarily by regulation of HisG enzymatic activity. The protein is ATP phosphoribosyltransferase of Tolumonas auensis (strain DSM 9187 / NBRC 110442 / TA 4).